We begin with the raw amino-acid sequence, 309 residues long: Methionyl-tRNA formyltransferase (309 aa).

(6S)-5,6,7,8-tetrahydrofolate is bound at residue 112–115; that stretch reads SLLP.

This sequence belongs to the Fmt family.

It catalyses the reaction L-methionyl-tRNA(fMet) + (6R)-10-formyltetrahydrofolate = N-formyl-L-methionyl-tRNA(fMet) + (6S)-5,6,7,8-tetrahydrofolate + H(+). Its function is as follows. Attaches a formyl group to the free amino group of methionyl-tRNA(fMet). The formyl group appears to play a dual role in the initiator identity of N-formylmethionyl-tRNA by promoting its recognition by IF2 and preventing the misappropriation of this tRNA by the elongation apparatus. This chain is Methionyl-tRNA formyltransferase, found in Bartonella bacilliformis (strain ATCC 35685 / KC583 / Herrer 020/F12,63).